Here is a 1034-residue protein sequence, read N- to C-terminus: Potassium-transporting ATPase alpha chain 1 (1034 aa).

Residues 1 to 97 (MGKAENYEMY…NALRPPRGTP (97 aa)) are Cytoplasmic-facing. Tyr-7 and Tyr-10 each carry phosphotyrosine. Positions 14–41 (LGPGPGGDMAAKMSKKKAGKGGGKKKEK) are disordered. Positions 26-39 (MSKKKAGKGGGKKK) are enriched in basic residues. The residue at position 27 (Ser-27) is a Phosphoserine. The helical transmembrane segment at 98–118 (EYVKFARQLAGGLQCLMWVAA) threads the bilayer. Topologically, residues 119–141 (AICLIAFAIQASEGDLTTDDNLY) are lumenal. A helical transmembrane segment spans residues 142-162 (LALALIAVVVVTGCFGYYQEF). The Cytoplasmic portion of the chain corresponds to 163–298 (KSTNIIASFK…NEKTPIAIEI (136 aa)). A compositionally biased stretch (polar residues) spans 225–239 (NSSLTGESEPQTRSP). The tract at residues 225-245 (NSSLTGESEPQTRSPECTHES) is disordered. Residues 299–318 (EHFVDIIAGLAILFGATFFV) traverse the membrane as a helical segment. Residues 319–330 (VAMCIGYTFLRA) are Lumenal-facing. The helical transmembrane segment at 331 to 348 (MVFFMAIVVAYVPEGLLA) threads the bilayer. Positions 339, 340, 342, and 344 each coordinate K(+). The Cytoplasmic segment spans residues 349–782 (TVTVCLSLTA…EQGRLIFDNL (434 aa)). Asp-386 functions as the 4-aspartylphosphate intermediate in the catalytic mechanism. Mg(2+) is bound by residues Asp-386 and Thr-388. Phosphoserine is present on residues Ser-462 and Ser-600. Residues Asp-727 and Asp-731 each coordinate Mg(2+). The chain crosses the membrane as a helical span at residues 783–802 (KKSIAYTLTKNIPELTPYLI). Glu-796 is a K(+) binding site. Over 803 to 812 (YITVSVPLPL) the chain is Lumenal. Residues 813 to 833 (GCITILFIELCTDIFPSVSLA) traverse the membrane as a helical segment. Glu-821 is a K(+) binding site. At 834–853 (YEKAESDIMHLRPRNPKRDR) the chain is on the cytoplasmic side. A Phosphoserine modification is found at Ser-839. A helical membrane pass occupies residues 854 to 876 (LVNEPLAAYSYFQIGAIQSFAGF). The Lumenal segment spans residues 877 to 928 (TDYFTAMAQEGWFPLLCVGLRPYWENHHLQDLQDSYGQEWTFGQRLYQQYTC). The helical transmembrane segment at 929–948 (YTVFFISIEMCQIADVLIRK) threads the bilayer. At 949–962 (TRRLSAFQQGFFRN) the chain is on the cytoplasmic side. Phosphoserine; by PKA is present on Ser-953. Residues 963–981 (RILVIAIVFQVCIGCFLCY) form a helical membrane-spanning segment. The Lumenal portion of the chain corresponds to 982–996 (CPGMPNIFNFMPIRY). The helical transmembrane segment at 997–1017 (QWWLVPMPFGLLIFVYDEIRK) threads the bilayer. At 1018 to 1034 (LGVRCCPGSWWDQELYY) the chain is on the cytoplasmic side.

Belongs to the cation transport ATPase (P-type) (TC 3.A.3) family. Type IIC subfamily. In terms of assembly, the gastric H(+)/K(+) ATPase pump is composed of the catalytic alpha subunit ATP4A and the regulatory beta subunit ATP4B. Interacts (via the P-domain) with ATP4B (via N-terminus); this interaction stabilizes the lumenal-open E2 conformation state and prevents the reverse reaction of the transport cycle.

The protein localises to the apical cell membrane. It carries out the reaction K(+)(out) + ATP + H2O + H(+)(in) = K(+)(in) + ADP + phosphate + 2 H(+)(out). The catalytic subunit of the gastric H(+)/K(+) ATPase pump which transports H(+) ions in exchange for K(+) ions across the apical membrane of parietal cells. Uses ATP as an energy source to pump H(+) ions to the gastric lumen while transporting K(+) ion from the lumen into the cell. Remarkably generates a million-fold proton gradient across the gastric parietal cell membrane, acidifying the gastric juice down to pH 1. Within a transport cycle, the transfer of a H(+) ion across the membrane is coupled to ATP hydrolysis and is associated with a transient phosphorylation that shifts the pump conformation from inward-facing (E1) to outward-facing state (E2). The release of the H(+) ion in the stomach lumen is followed by binding of K(+) ion converting the pump conformation back to the E1 state. This chain is Potassium-transporting ATPase alpha chain 1 (ATP4A), found in Canis lupus familiaris (Dog).